The following is a 191-amino-acid chain: RRP15-like protein (191 aa).

Positions 1-11 (MSTKNRDRLVV) are enriched in basic and acidic residues. The segment at 1–52 (MSTKNRDRLVVTEDSDDDNEREEMSSGGESGEEGPSSVDGGAGDADETVAFP) is disordered. The stretch at 53-84 (AIERRKKKVIKKLTKKEQSLKKSVKEYRIKLA) forms a coiled coil. Basic and acidic residues predominate over residues 119–153 (QKTMSDAVKEKMTARERREARQRFDGKNFDSDRFA). The segment at 119–191 (QKTMSDAVKE…IDTGNYSDED (73 aa)) is disordered. Residues 166 to 191 (GEDDDGEDQMDIGEEQIDTGNYSDED) are compositionally biased toward acidic residues.

Belongs to the RRP15 family.

In Caenorhabditis elegans, this protein is RRP15-like protein.